We begin with the raw amino-acid sequence, 302 residues long: Quinolinate synthase (302 aa).

The iminosuccinate site is built by His-24 and Ser-41. Cys-86 is a binding site for [4Fe-4S] cluster. Residues 112–114 and Ser-129 contribute to the iminosuccinate site; that span reads YVN. [4Fe-4S] cluster is bound at residue Cys-171. Iminosuccinate-binding positions include 197–199 and Thr-214; that span reads HPE. Cys-259 is a binding site for [4Fe-4S] cluster.

Belongs to the quinolinate synthase family. Type 2 subfamily. The cofactor is [4Fe-4S] cluster.

It localises to the cytoplasm. The catalysed reaction is iminosuccinate + dihydroxyacetone phosphate = quinolinate + phosphate + 2 H2O + H(+). The protein operates within cofactor biosynthesis; NAD(+) biosynthesis; quinolinate from iminoaspartate: step 1/1. Functionally, catalyzes the condensation of iminoaspartate with dihydroxyacetone phosphate to form quinolinate. The chain is Quinolinate synthase from Dehalococcoides mccartyi (strain CBDB1).